A 171-amino-acid polypeptide reads, in one-letter code: Protein-export protein SecB (171 aa).

This sequence belongs to the SecB family. In terms of assembly, homotetramer, a dimer of dimers. One homotetramer interacts with 1 SecA dimer.

It is found in the cytoplasm. One of the proteins required for the normal export of preproteins out of the cell cytoplasm. It is a molecular chaperone that binds to a subset of precursor proteins, maintaining them in a translocation-competent state. It also specifically binds to its receptor SecA. The chain is Protein-export protein SecB from Jannaschia sp. (strain CCS1).